A 966-amino-acid polypeptide reads, in one-letter code: Leucine--tRNA ligase (966 aa).

A 'HIGH' region motif is present at residues 41-51 (PYLNGNLHAGH). Positions 632 to 636 (KMSKS) match the 'KMSKS' region motif. Lysine 635 provides a ligand contact to ATP.

It belongs to the class-I aminoacyl-tRNA synthetase family.

It is found in the cytoplasm. It catalyses the reaction tRNA(Leu) + L-leucine + ATP = L-leucyl-tRNA(Leu) + AMP + diphosphate. The chain is Leucine--tRNA ligase from Methanosarcina barkeri (strain Fusaro / DSM 804).